The chain runs to 238 residues: Ribonuclease PH (238 aa).

Phosphate-binding positions include R86 and 124–126 (GTR).

It belongs to the RNase PH family. Homohexameric ring arranged as a trimer of dimers.

The enzyme catalyses tRNA(n+1) + phosphate = tRNA(n) + a ribonucleoside 5'-diphosphate. In terms of biological role, phosphorolytic 3'-5' exoribonuclease that plays an important role in tRNA 3'-end maturation. Removes nucleotide residues following the 3'-CCA terminus of tRNAs; can also add nucleotides to the ends of RNA molecules by using nucleoside diphosphates as substrates, but this may not be physiologically important. Probably plays a role in initiation of 16S rRNA degradation (leading to ribosome degradation) during starvation. In Nitrosospira multiformis (strain ATCC 25196 / NCIMB 11849 / C 71), this protein is Ribonuclease PH.